We begin with the raw amino-acid sequence, 588 residues long: WD repeat-containing protein DDB_G0349043 (588 aa).

Residues Met1–His32 form a disordered region. A LisH domain is found at Asn40–Leu72. A CTLH domain is found at Gln73 to Glu129. WD repeat units follow at residues Lys244–Pro283, Gly294–Thr333, and Lys336–Ser375. Positions Asn376–Asn403 are disordered. WD repeat units follow at residues Trp413–Val452, Met455–Lys494, Lys499–Thr539, and Arg542–Ile582.

The chain is WD repeat-containing protein DDB_G0349043 from Dictyostelium discoideum (Social amoeba).